Consider the following 169-residue polypeptide: Peptide methionine sulfoxide reductase MsrA (169 aa).

Residue cysteine 13 is part of the active site.

This sequence belongs to the MsrA Met sulfoxide reductase family.

It catalyses the reaction L-methionyl-[protein] + [thioredoxin]-disulfide + H2O = L-methionyl-(S)-S-oxide-[protein] + [thioredoxin]-dithiol. It carries out the reaction [thioredoxin]-disulfide + L-methionine + H2O = L-methionine (S)-S-oxide + [thioredoxin]-dithiol. Its function is as follows. Has an important function as a repair enzyme for proteins that have been inactivated by oxidation. Catalyzes the reversible oxidation-reduction of methionine sulfoxide in proteins to methionine. This chain is Peptide methionine sulfoxide reductase MsrA, found in Mycolicibacterium gilvum (strain PYR-GCK) (Mycobacterium gilvum (strain PYR-GCK)).